The following is a 115-amino-acid chain: Large ribosomal subunit protein bL20 (115 aa).

This sequence belongs to the bacterial ribosomal protein bL20 family.

Its function is as follows. Binds directly to 23S ribosomal RNA and is necessary for the in vitro assembly process of the 50S ribosomal subunit. It is not involved in the protein synthesizing functions of that subunit. In Chlorobaculum parvum (strain DSM 263 / NCIMB 8327) (Chlorobium vibrioforme subsp. thiosulfatophilum), this protein is Large ribosomal subunit protein bL20.